Consider the following 272-residue polypeptide: 2-amino-3,7-dideoxy-D-threo-hept-6-ulosonate synthase (272 aa).

The active-site Proton acceptor is aspartate 33. 1-deoxy-D-threo-hexo-2,5-diulose 6-phosphate contacts are provided by residues 33 to 37 and 153 to 155; these read DHGVS and YPR. Residue tyrosine 153 is the Proton donor of the active site. Lysine 184 serves as the catalytic Schiff-base intermediate with substrate. Residues 209–210 and 237–238 each bind 1-deoxy-D-threo-hexo-2,5-diulose 6-phosphate; these read GG and GR.

It belongs to the DeoC/FbaB aldolase family. ADHS subfamily. Homodecamer.

The catalysed reaction is 1-deoxy-D-threo-hexo-2,5-diulose 6-phosphate + L-aspartate 4-semialdehyde = 2,3-dioxopropyl phosphate + 2-amino-2,3,7-trideoxy-D-lyxo-hept-6-ulosonate. In terms of biological role, catalyzes a transaldol reaction between 6-deoxy-5-ketofructose 1-phosphate (DKFP) and L-aspartate semialdehyde (ASA) with an elimination of hydroxypyruvaldehyde phosphate to yield 2-amino-3,7-dideoxy-D-threo-hept-6-ulosonate (ADH). Plays a key role in an alternative pathway of the biosynthesis of 3-dehydroquinate (DHQ), which is involved in the canonical pathway for the biosynthesis of aromatic amino acids. This is 2-amino-3,7-dideoxy-D-threo-hept-6-ulosonate synthase from Methanococcus vannielii (strain ATCC 35089 / DSM 1224 / JCM 13029 / OCM 148 / SB).